The following is a 538-amino-acid chain: MFS-type transporter tndD (538 aa).

The interval 1–42 (MSLSGSDSHLAVSPTLAEDMNSSDTSAGLAETPPADEEKRSI) is disordered. N-linked (GlcNAc...) asparagine glycosylation is found at Asn-21 and Asn-71. A run of 11 helical transmembrane segments spans residues 81–101 (VGIV…FAPG), 115–135 (LLAG…PLIL), 153–173 (ICFT…MLIA), 203–223 (GGVI…GPVA), 235–255 (WVFW…FLFL), 309–329 (PIVA…YLMF), 348–368 (GLTF…IGAV), 394–414 (LPPL…YGWS), 422–442 (IVPI…FMCI), 444–464 (SYLV…NTVV), and 485–505 (LGWG…IPWA).

This sequence belongs to the major facilitator superfamily.

It is found in the membrane. In terms of biological role, MFS-type transporter; part of the gene cluster that mediates the biosynthesis of talaronoid C, a fusicoccane diterpenoid with an unprecedented tricyclic 5/8/6 ring system. This chain is MFS-type transporter tndD, found in Aspergillus flavipes.